Consider the following 554-residue polypeptide: MALSIMSSYASFRPFKPSSSLSSSQNIIRNFDENSKYHIRSNGDLTPQKDLDKYRDVLRKADPFDEGLKMIDAIQRLGIDYIFEEEIDKIIQSQSAYKFFREFEHDHHHHQDLYDVALRFRLLRQHGHFVPADIFNKYKDNNKGCFDTRLREDIKGLLSLYEASHLCIEGENILDEAALFSAQHLEASMTRLHRYDQYQAKYVATTLQNPTHKSLSKFTAKDLFGVYPSENGYINLFQQLAKVEFNRVQSLHRMEIDKVTRWWRDIGLAKELTFARDQPVKWYIWSMACLTDPILSKQRVALTKSISFIYVIDDIFDMYSSLDELILFTQAVSSWEYSAIEKLPDSMKTCFKALDNMINESSHTIYQKRGWSPLHSLRKTWASLCEAFLVEAKWFASRHVPKAKEYLENGVVSSGVHVVLVHIFVLLDETSLTQKTLDFVENMPSIITSTASILRLWDDFGSAKDENQEGHDGSYVECYMKELGGSVEDAREEMMEKISDAWKCLNKECILRNPAFPPPFLKASLNLARLVPLMYNYDHNQRLPHLEEHIKSLL.

Residues arginine 276, aspartate 313, aspartate 317, arginine 455, and aspartate 458 each coordinate (2E,6E)-farnesyl diphosphate. Mg(2+) is bound by residues aspartate 313 and aspartate 317. The DDXXD motif signature appears at 313–317 (DDIFD). The Mg(2+) site is built by aspartate 458, serine 462, and glutamate 466.

This sequence belongs to the terpene synthase family. Tpsb subfamily. Mg(2+) serves as cofactor. Requires Mn(2+) as cofactor. Highly expressed in glandular trichomes.

It catalyses the reaction (2E,6E)-farnesyl diphosphate + H2O = (6E)-nerolidol + diphosphate. The enzyme catalyses (2E)-geranyl diphosphate + H2O = (R)-linalool + diphosphate. It carries out the reaction (2E)-geranyl diphosphate + H2O = (S)-linalool + diphosphate. Its pathway is secondary metabolite biosynthesis; terpenoid biosynthesis. Its function is as follows. Involved in sesquiterpene olefins biosynthesis, constituants of cannabinoids and terpenoids-rich resins. Catalyzes primarily the conversion of (2E)-farnesyl diphosphate to (E)-nerolidol, and the conversion of (2E)-geranyl diphosphate to (+)linalool and (-)linalool. The protein is (E)-nerolidol synthase TPS18VF of Cannabis sativa (Hemp).